The primary structure comprises 181 residues: Transcription termination/antitermination protein NusG (181 aa).

In terms of domain architecture, KOW spans 130–161 (PGELVRVSDGPFADFNGVVEEVDYEKSRLKVS).

The protein belongs to the NusG family. As to quaternary structure, monomer. Interacts with the transcription termination factor Rho and with RNA polymerase.

Functionally, participates in transcription elongation, termination and antitermination. In the absence of Rho, increases the rate of transcription elongation by the RNA polymerase (RNAP), probably by partially suppressing pausing. In the presence of Rho, modulates most Rho-dependent termination events by interacting with the RNAP to render the complex more susceptible to the termination activity of Rho. May be required to overcome a kinetic limitation of Rho to function at certain terminators. Also involved in ribosomal RNA transcriptional antitermination. This Yersinia pestis protein is Transcription termination/antitermination protein NusG.